The sequence spans 545 residues: Reticulon-2 (545 aa).

Disordered regions lie at residues 1–183 (MGQV…ETGE) and 199–250 (SPEV…EREP). Over residues 14–25 (APSTASSTPDST) the composition is skewed to low complexity. The segment covering 32–43 (SDFRELHTAREF) has biased composition (basic and acidic residues). Serine 44 carries the post-translational modification Phosphoserine. Basic and acidic residues predominate over residues 135–146 (RPLEDLRLRLDH). Low complexity predominate over residues 157–166 (GEDSSTSSST). Positions 199 to 230 (SPEVLTPQLSPGSGTPQAGTPSPSRSRDSNSG) are enriched in polar residues. Phosphoserine occurs at positions 227 and 229. The 201-residue stretch at 345–545 (VADLLYWKDT…AVSGSKAKAE (201 aa)) folds into the Reticulon domain. 2 helical membrane passes run 368–388 (LLCL…LLLL) and 463–483 (LLFY…LLIL).

Interacts with isoform 1 but not isoform 3 of SPAST. Interacts with BACE1. Interacts (via first transmembrane domain) with ARL6IP5/GTRAP3-18. Interacts (via N-terminus) with SLC1A1/EAAC1; the interaction promotes cell surface expression of SLC1A1. As to quaternary structure, interacts with TMEM33. As to expression, highly expressed in skeletal muscle.

It localises to the endoplasmic reticulum membrane. The protein localises to the sarcoplasmic reticulum membrane. Its subcellular location is the cell membrane. The protein resides in the sarcolemma. It is found in the T-tubule. It localises to the cytoplasm. The protein localises to the myofibril. Its subcellular location is the sarcomere. The protein resides in the z line. It is found in the cytoskeleton. Functionally, inhibits amyloid precursor protein processing, probably by blocking BACE1 activity. Enhances trafficking of the glutamate transporter SLC1A1/EAAC1 from the endoplasmic reticulum to the cell surface. Plays a role in the translocation of SLC2A4/GLUT4 from intracellular membranes to the cell membrane which facilitates the uptake of glucose into the cell. This chain is Reticulon-2 (RTN2), found in Homo sapiens (Human).